A 341-amino-acid chain; its full sequence is Cell division protein ZipA (341 aa).

At 1-6 (MENLQL) the chain is on the periplasmic side. Residues 7–27 (VLFVLGAIAIVAVLVHGFWSI) form a helical membrane-spanning segment. Topologically, residues 28–341 (RKQQPKSLKE…YLQRIRTQNS (314 aa)) are cytoplasmic. Disordered stretches follow at residues 35–134 (LKES…PVLS) and 157–201 (QSSL…PEPE). Residues 90 to 100 (TLTSEGQMDSS) are compositionally biased toward polar residues. The span at 175–190 (SIEVPEPVSEPVLESV) shows a compositional bias: low complexity. Positions 192–201 (EPEPVAPEPE) are enriched in pro residues.

This sequence belongs to the ZipA family. Interacts with FtsZ via their C-terminal domains.

It localises to the cell inner membrane. Its function is as follows. Essential cell division protein that stabilizes the FtsZ protofilaments by cross-linking them and that serves as a cytoplasmic membrane anchor for the Z ring. Also required for the recruitment to the septal ring of downstream cell division proteins. This Shewanella sediminis (strain HAW-EB3) protein is Cell division protein ZipA.